A 704-amino-acid polypeptide reads, in one-letter code: Boron transporter 1 (704 aa).

The Cytoplasmic segment spans residues 1 to 35; that stretch reads MEETFVPFEGIKNDLKGRLMCYKQDWTGGFKAGFR. Residues 36-56 form a helical membrane-spanning segment; it reads ILAPTTYIFFASAIPVISFGE. Over 57-75 the chain is Extracellular; sequence QLERSTDGVLTAVQTLAST. A helical membrane pass occupies residues 76-96; that stretch reads AICGMIHSIIGGQPLLILGVA. Residues 97 to 120 lie on the Cytoplasmic side of the membrane; the sequence is EPTVIMYTFMFNFAKARPELGRDL. A helical membrane pass occupies residues 121-141; it reads FLAWSGWVCVWTALMLFVLAI. Over 142–155 the chain is Extracellular; sequence CGACSIINRFTRVA. A helical transmembrane segment spans residues 156–176; the sequence is GELFGLLIAMLFMQQAIKGLV. Over 177–195 the chain is Cytoplasmic; that stretch reads DEFRIPERENQKLKEFLPS. Residues 196-216 form a helical membrane-spanning segment; that stretch reads WRFANGMFALVLSFGLLLTGL. The Extracellular segment spans residues 217-233; that stretch reads RSRKARSWRYGTGWLRS. A helical transmembrane segment spans residues 234–254; it reads LIADYGVPLMVLVWTGVSYIP. At 255-289 the chain is on the cytoplasmic side; that stretch reads AGDVPKGIPRRLFSPNPWSPGAYGNWTVVKEMLDV. A helical transmembrane segment spans residues 290 to 310; that stretch reads PIVYIIGAFIPASMIAVLYYF. Residues 311-337 lie on the Extracellular side of the membrane; the sequence is DHSVASQLAQQKEFNLRKPSSYHYDLL. The helical transmembrane segment at 338–358 threads the bilayer; that stretch reads LLGFLTLMCGLLGVPPSNGVI. Residues 359–480 lie on the Cytoplasmic side of the membrane; sequence PQSPMHTKSL…STMVGGCVAA (122 aa). The chain crosses the membrane as a helical span at residues 481–501; sequence MPILKMIPTSVLWGYFAFMAI. At 502 to 557 the chain is on the extracellular side; sequence ESLPGNQFWERILLLFTAPSRRFKVLEDYHATFVETVPFKTIAMFTLFQTTYLLIC. The chain crosses the membrane as a helical span at residues 558-578; that stretch reads FGLTWIPIAGVMFPLMIMFLI. The Cytoplasmic segment spans residues 579 to 704; it reads PVRQYLLPRF…RSPLNQSSSN (126 aa). The segment at 641-704 is disordered; it reads EFRHTSSPKV…RSPLNQSSSN (64 aa). Over residues 647–664 the composition is skewed to low complexity; the sequence is SPKVTSSSSTPVNNRSLS.

It belongs to the anion exchanger (TC 2.A.31.3) family. In terms of tissue distribution, expressed in proximal side of various root cells, notably in the columella, lateral root cap, epidermis and endodermis in tip and elongation zones of the root. Also detected in the epidermis, cortex, endodermis, and stele cells of the root hair zone. Observed in cotyledons and hypocotyls.

It is found in the cell membrane. The protein resides in the endosome membrane. Its subcellular location is the vacuole membrane. Efflux-type boron (B) transporter for xylem loading, responsive of boron translocation from roots to shoots under boron limitation. Boron is essential for maintaining the integrity of plants cell walls. In Arabidopsis thaliana (Mouse-ear cress), this protein is Boron transporter 1.